The chain runs to 64 residues: Translation machinery-associated protein 7 homolog (64 aa).

The disordered stretch occupies residues 1-64; the sequence is MSGRQGGKAK…GGGIKKSGKK (64 aa). The stretch at 21 to 50 forms a coiled coil; sequence DLSEEDVEFKKKQQEEAKKIKEMAAKAGQR. Residues 28–44 show a composition bias toward basic and acidic residues; that stretch reads EFKKKQQEEAKKIKEMA. Residues 53–64 show a composition bias toward gly residues; that stretch reads LLGGGIKKSGKK.

It belongs to the TMA7 family.

In Caenorhabditis elegans, this protein is Translation machinery-associated protein 7 homolog.